The primary structure comprises 341 residues: L-threonine 3-dehydrogenase (341 aa).

Position 38 (C38) interacts with Zn(2+). Residues T40 and H43 each act as charge relay system in the active site. Zn(2+) contacts are provided by H63, E64, C93, C96, C99, and C107. NAD(+)-binding positions include I175, D195, R200, 262-264 (LGI), and 286-287 (IY).

Belongs to the zinc-containing alcohol dehydrogenase family. Homotetramer. Zn(2+) is required as a cofactor.

Its subcellular location is the cytoplasm. It carries out the reaction L-threonine + NAD(+) = (2S)-2-amino-3-oxobutanoate + NADH + H(+). It functions in the pathway amino-acid degradation; L-threonine degradation via oxydo-reductase pathway; glycine from L-threonine: step 1/2. Catalyzes the NAD(+)-dependent oxidation of L-threonine to 2-amino-3-ketobutyrate. This is L-threonine 3-dehydrogenase from Marinomonas sp. (strain MWYL1).